Here is a 402-residue protein sequence, read N- to C-terminus: 1-deoxy-D-xylulose 5-phosphate reductoisomerase (402 aa).

Positions 25, 26, 27, 28, 52, 53, and 136 each coordinate NADPH. Residue K137 participates in 1-deoxy-D-xylulose 5-phosphate binding. Residue E138 participates in NADPH binding. D162 provides a ligand contact to Mn(2+). 1-deoxy-D-xylulose 5-phosphate-binding residues include S163, E164, S188, and H211. E164 lines the Mn(2+) pocket. G217 provides a ligand contact to NADPH. Residues S224, N229, K230, and E233 each contribute to the 1-deoxy-D-xylulose 5-phosphate site. E233 contacts Mn(2+).

The protein belongs to the DXR family. Mg(2+) serves as cofactor. The cofactor is Mn(2+).

It carries out the reaction 2-C-methyl-D-erythritol 4-phosphate + NADP(+) = 1-deoxy-D-xylulose 5-phosphate + NADPH + H(+). It functions in the pathway isoprenoid biosynthesis; isopentenyl diphosphate biosynthesis via DXP pathway; isopentenyl diphosphate from 1-deoxy-D-xylulose 5-phosphate: step 1/6. Its function is as follows. Catalyzes the NADPH-dependent rearrangement and reduction of 1-deoxy-D-xylulose-5-phosphate (DXP) to 2-C-methyl-D-erythritol 4-phosphate (MEP). The polypeptide is 1-deoxy-D-xylulose 5-phosphate reductoisomerase (Rhodospirillum centenum (strain ATCC 51521 / SW)).